The primary structure comprises 430 residues: Gamma-glutamyl phosphate reductase (430 aa).

Belongs to the gamma-glutamyl phosphate reductase family.

It is found in the cytoplasm. The enzyme catalyses L-glutamate 5-semialdehyde + phosphate + NADP(+) = L-glutamyl 5-phosphate + NADPH + H(+). Its pathway is amino-acid biosynthesis; L-proline biosynthesis; L-glutamate 5-semialdehyde from L-glutamate: step 2/2. In terms of biological role, catalyzes the NADPH-dependent reduction of L-glutamate 5-phosphate into L-glutamate 5-semialdehyde and phosphate. The product spontaneously undergoes cyclization to form 1-pyrroline-5-carboxylate. In Rhodopseudomonas palustris (strain ATCC BAA-98 / CGA009), this protein is Gamma-glutamyl phosphate reductase.